Consider the following 745-residue polypeptide: Translation initiation factor IF-2 (745 aa).

Residues 1 to 154 are disordered; sequence MSDKPRRDTG…PAARPVVRPR (154 aa). Residues 36–56 show a composition bias toward polar residues; it reads TGRSPNASTGGNRSAGNQAGN. The span at 68-98 shows a compositional bias: low complexity; the sequence is ATTPAPNRNTPPAGARQGGAANARTGTPPVA. A compositionally biased stretch (gly residues) spans 99–113; the sequence is RGGGGGVTPPTGRGG. The segment covering 114–126 has biased composition (low complexity); the sequence is NNPRAARNQPRSR. Positions 127-138 are enriched in basic and acidic residues; the sequence is QQPEEREREHVL. A tr-type G domain is found at 241–410; it reads PRPPVVTIMG…LLVADLEDLR (170 aa). The tract at residues 250 to 257 is G1; it reads GHVDHGKT. Residue 250–257 participates in GTP binding; the sequence is GHVDHGKT. Positions 275–279 are G2; sequence GITQH. The tract at residues 296 to 299 is G3; sequence DTPG. Residues 296–300 and 350–353 contribute to the GTP site; these read DTPGH and NKID. The segment at 350-353 is G4; sequence NKID. Residues 386 to 388 form a G5 region; the sequence is SAR.

The protein belongs to the TRAFAC class translation factor GTPase superfamily. Classic translation factor GTPase family. IF-2 subfamily.

The protein localises to the cytoplasm. Functionally, one of the essential components for the initiation of protein synthesis. Protects formylmethionyl-tRNA from spontaneous hydrolysis and promotes its binding to the 30S ribosomal subunits. Also involved in the hydrolysis of GTP during the formation of the 70S ribosomal complex. This is Translation initiation factor IF-2 from Chloroflexus aurantiacus (strain ATCC 29366 / DSM 635 / J-10-fl).